The following is a 62-amino-acid chain: Potassium channel toxin kappa-KTx 3.3 (62 aa).

The first 26 residues, 1-26, serve as a signal peptide directing secretion; that stretch reads MKSTLMTASLLILVLLSIVDYASVYA. Residues 27-36 constitute a propeptide that is removed on maturation; sequence ELIDSEISME. Disulfide bonds link Cys-43/Cys-61 and Cys-47/Cys-57.

The protein belongs to the short scorpion toxin superfamily. Potassium channel inhibitor kappa-KTx family. Kappa-KTx 3 subfamily. Expressed by the venom gland.

The protein resides in the secreted. Potassium channel inhibitor (Kv). In Heterometrus petersii (Asian forest scorpion), this protein is Potassium channel toxin kappa-KTx 3.3.